A 285-amino-acid polypeptide reads, in one-letter code: Phycobilisome 31.6 kDa linker polypeptide, phycocyanin-associated, rod (285 aa).

The region spanning 1–180 (MPITTAASRL…LYRGYATSDR (180 aa)) is the PBS-linker domain.

This sequence belongs to the phycobilisome linker protein family.

The protein localises to the cellular thylakoid membrane. Its function is as follows. Rod linker protein, associated with phycocyanin. Linker polypeptides determine the state of aggregation and the location of the disk-shaped phycobiliprotein units within the phycobilisome and modulate their spectroscopic properties in order to mediate a directed and optimal energy transfer. The protein is Phycobilisome 31.6 kDa linker polypeptide, phycocyanin-associated, rod (cpcI3) of Microchaete diplosiphon (Fremyella diplosiphon).